A 375-amino-acid chain; its full sequence is Aldehyde reductase FrzD (375 aa).

FMN-binding residues include A61, Q103, and H171. Y176 serves as the catalytic Proton donor. Residues K223, G294, and R319 each coordinate FMN.

This sequence belongs to the NADH:flavin oxidoreductase/NADH oxidase family. Requires FMN as cofactor.

The catalysed reaction is (1S,4S)-4-[(4-hydroxyphenyl)methyl]-2,5-diazaspiro[bicyclo[3.2.1]octane-6,1'-cyclohexane]-2',5'-dien-4'-one + 2 NADPH + 2 H(+) = (1S,4S)-4-[(4-hydroxyphenyl)methyl]-2,5-diazaspiro[bicyclo[3.2.1]octane-6,1'-cyclohexan]-4'-one + 2 NADP(+). It functions in the pathway alkaloid biosynthesis; ergot alkaloid biosynthesis. Aldehyde reductase; part of the gene cluster that mediates the biosynthesis of the alkaloid (-)-FR901483, a potent immunosuppressant that shows efficacy in animal models and a probable inhibitor of purine nucleotide biosynthesis by targeting phosphoribosylpyrophosphate amidotransferase (PPAT). Within the pathway, FrzD reduces the dienone portion of the pathway intermediates to cyclohexanone. The biosynthesis of (-)-FR901483 starts with the condensation of two L-tyrosines to yield (S,S)-dityrosyl-piperazine. This process occurs in 3 steps with the non-canonical nonribosomal peptide synthetase FrzA catalyzing the reduction of L-tyrosine into L-tyrosinal, the spontaneous condensation of 2 L-tyrosinal units, and the subsequent reduction by the NmrA-like family domain-containing oxidoreductase FrzB. The cytochrome P450 monooxygenase FrzC then performs coupling between N10 and C1' to morph the piperazine into a 1,4-diazabicyclo[3.2.1]octane spiro-fused to a 2,5-cyclohexadienone. The dienone portion is further reduced to cyclohexanone by the flavin-dependent reductase FrzD. The methyltranserases (MTs) FrzE and FrzF are then involved in the methylation at the C10' amine and the C4 phenolic oxygen, respectively. The order of the two MTs appear to be interchangeable. Cleavage of the C9-N10' bond by the dioxygenase FrzG then leads to formation of a conjugated iminium. In addition to the oxidation of C9, an additional dehydrogenation between C7 and C8 can occur to give a likely shunt product. The next biosynthetic step is the intramolecular aldol condensation catalyzed by the newly identified aldolase FrzH to yield an aza-tricyclic product with the formation of a C9-C3' bond. The short-chain dehydrogenase/reductase FrzI then produces dephospho-(-)-FR901483 that is phosphorylated at C4'-OH into (-)-FR901483 by the phosphotransferase FrzJ. The only unassigned enzyme in the cluster is the second cytochrome P450 monooxygenase FrzL. The protein is Aldehyde reductase FrzD of Cladobotryum sp.